The sequence spans 142 residues: Hemoglobin subunit alpha (142 aa).

S1 is modified (N-acetylserine). Positions 1 to 142 constitute a Globin domain; the sequence is SLTAKSKSIV…VASALSEKYR (142 aa). H59 is an O2 binding site. Residue H88 coordinates heme b.

The protein belongs to the globin family. In terms of assembly, heterotetramer of two alpha chains and two beta chains. In terms of tissue distribution, red blood cells.

Functionally, involved in oxygen transport from gills to the various peripheral tissues. The polypeptide is Hemoglobin subunit alpha (hba) (Electrophorus electricus (Electric eel)).